Reading from the N-terminus, the 297-residue chain is MMDSEAHEKRPPILTSSKQDISPHITNVGEMKHYLCGCCAAFNNVAITFPIQKVLFRQQLYGIKTRDAILQLRRDGFRNLYRGILPPLMQKTTTLALMFGLYEDLSCLLHKHVSAPEFATSGVAAVLAGTTEAIFTPLERVQTLLQDHKHHDKFTNTYQAFKALKCHGIGEYYRGLVPILFRNGLSNVLFFGLRGPIKEHLPTATTHSAHLVNDFICGGLLGAMLGFLFFPINVVKTRIQSQIGGEFQSFPKVFQKIWLERDRKLINLFRGAHLNYHRSLISWGIINATYEFLLKVI.

The segment covering Met-1 to Pro-11 has biased composition (basic and acidic residues). Positions Met-1–Asp-20 are disordered. Solcar repeat units follow at residues Val-28–Leu-108, Pro-116–His-200, and Asn-213–Val-296. 6 consecutive transmembrane segments (helical) span residues Cys-36–Phe-56, Leu-85–Leu-105, Pro-116–Phe-135, Ile-179–Glu-199, Phe-215–Val-235, and Leu-268–Thr-289.

Belongs to the mitochondrial carrier (TC 2.A.29) family.

The protein localises to the mitochondrion inner membrane. It carries out the reaction NAD(+)(in) = NAD(+)(out). Mitochondrial membrane carrier protein that mediates the import of NAD(+) into mitochondria. Mitochondrial NAD(+) is required for glycolysis and mitochondrial respiration. Compared to SLC25A52, SLC25A51-mediated transport is essential for the import of NAD(+) in mitochondria. The transport mechanism, uniport or antiport, its electrogenicity and substrate selectivity, remain to be elucidated. The sequence is that of Mitochondrial nicotinamide adenine dinucleotide transporter SLC25A51 from Homo sapiens (Human).